The chain runs to 363 residues: Phosrestin-2 (363 aa).

It belongs to the arrestin family.

The sequence is that of Phosrestin-2 (ARR1) from Calliphora vicina (Blue blowfly).